A 543-amino-acid polypeptide reads, in one-letter code: ATP-dependent ubiquitin transferase-like protein Cap2 (543 aa).

The tract at residues 1-159 is E2-like domain; it reads MSSAAAVADV…QNCIVAHANG (159 aa). Cys84 (for E2-like domain) is an active-site residue. The tract at residues 160–305 is linker domain; sequence CPLWFITDNE…YLAQRNMPNS (146 aa). The interval 306–543 is adenylation plus E1-like domain; sequence KTLAGKNIAV…RDRECPLCNS (238 aa). Catalysis depends on for E1-like domain residues Cys450 and Cys453.

It in the C-terminal section; belongs to the HesA/MoeB/ThiF family. In terms of assembly, forms a Cap2-CdnA complex. A Cap2 dimer is bound on either side by a CdnA monomer.

CD-NTase priming component of a CBASS antiviral system. CBASS (cyclic oligonucleotide-based antiphage signaling system) provides immunity against bacteriophages. The CD-NTase protein (CdnA) synthesizes cyclic nucleotides in response to infection; these serve as specific second messenger signals. The signals activate a diverse range of effectors, leading to bacterial cell death and thus abortive phage infection. A type II-A(GA) CBASS system. In terms of biological role, acts as a protein transferase, conjugating CdnA, the CD-NTase, to unidentified target(s) in the cell probably via an E1-E2 ubiquitin transferase-like mechanism. This primes CdnA, upon phage infection CdnA activates and makes cyclic nucleotides. Protein conjugation requires ATP. Its function is as follows. The capV-cdnA-cap2-cap3 operon provides about 10(4)-fold protection in strain BWHPSA011 against infection by phage PaMx41. In P.aeruginosa strain PAO1 it confers protection against phages PaMx41 and JBD18 but not JBD67 (JBD18 and JBD67 do not replicate in BWHPSA011 / Pa011). When acb2 in JBD67 is deleted this CBASS operon then protects against JDB67 also. This CBASS system limits prophage induction of lysogenized JBD67 as well as viral lytic replication. The chain is ATP-dependent ubiquitin transferase-like protein Cap2 from Pseudomonas aeruginosa (strain BWHPSA011 / Pa011).